The chain runs to 286 residues: Energy-coupling factor transporter ATP-binding protein EcfA2 (286 aa).

Residues 3 to 246 (IRFDNVSYTY…KEKLADWHIA (244 aa)) form the ABC transporter domain. Residue 40–47 (GQTGSGKS) coordinates ATP.

The protein belongs to the ABC transporter superfamily. Energy-coupling factor EcfA family. As to quaternary structure, forms a stable energy-coupling factor (ECF) transporter complex composed of 2 membrane-embedded substrate-binding proteins (S component), 2 ATP-binding proteins (A component) and 2 transmembrane proteins (T component).

The protein localises to the cell membrane. Functionally, ATP-binding (A) component of a common energy-coupling factor (ECF) ABC-transporter complex. Unlike classic ABC transporters this ECF transporter provides the energy necessary to transport a number of different substrates. This is Energy-coupling factor transporter ATP-binding protein EcfA2 from Staphylococcus aureus (strain bovine RF122 / ET3-1).